Here is a 553-residue protein sequence, read N- to C-terminus: Phospholipase B (553 aa).

The N-terminal stretch at 1-35 (MIRFGNPSSSDKRRQRCRSWYWGGLLLLWAVAETR) is a signal peptide. 3 N-linked (GlcNAc...) asparagine glycosylation sites follow: asparagine 313, asparagine 416, and asparagine 531.

Belongs to the phospholipase B-like family. As to expression, expressed by the venom gland.

It is found in the secreted. In terms of biological role, may cause hemolysis or may be involved in protein folding and translation. The protein is Phospholipase B of Crotalus adamanteus (Eastern diamondback rattlesnake).